The chain runs to 519 residues: Cytochrome P450 4A22 (519 aa).

Positions 1 to 4 (MSVS) are excised as a propeptide. Glutamate 321 lines the heme pocket. Phosphoserine is present on serine 440. Cysteine 457 is a binding site for heme.

This sequence belongs to the cytochrome P450 family.

It localises to the endoplasmic reticulum membrane. It is found in the microsome membrane. It catalyses the reaction an omega-methyl-long-chain fatty acid + reduced [NADPH--hemoprotein reductase] + O2 = an omega-hydroxy-long-chain fatty acid + oxidized [NADPH--hemoprotein reductase] + H2O + H(+). Catalyzes the omega- and (omega-1)-hydroxylation of various fatty acids such as laurate and palmitate. Shows no activity towards arachidonic acid and prostaglandin A1. Lacks functional activity in the kidney and does not contribute to renal 20-hydroxyeicosatetraenoic acid (20-HETE) biosynthesis. This is Cytochrome P450 4A22 (CYP4A22) from Homo sapiens (Human).